We begin with the raw amino-acid sequence, 68 residues long: DNA-directed RNA polymerase subunit omega (68 aa).

Belongs to the RNA polymerase subunit omega family. The RNAP catalytic core consists of 2 alpha, 1 beta, 1 beta' and 1 omega subunit. When a sigma factor is associated with the core the holoenzyme is formed, which can initiate transcription.

It carries out the reaction RNA(n) + a ribonucleoside 5'-triphosphate = RNA(n+1) + diphosphate. Its function is as follows. Promotes RNA polymerase assembly. Latches the N- and C-terminal regions of the beta' subunit thereby facilitating its interaction with the beta and alpha subunits. The sequence is that of DNA-directed RNA polymerase subunit omega from Nitrosospira multiformis (strain ATCC 25196 / NCIMB 11849 / C 71).